Reading from the N-terminus, the 244-residue chain is Krueppel-like factor 9 (244 aa).

Disordered stretches follow at residues 26-51 (EHGGAPEAERLRLPEREVTKEHGDPG) and 79-143 (PSVC…EKRH). The segment covering 32-51 (EAERLRLPEREVTKEHGDPG) has biased composition (basic and acidic residues). S122 bears the Phosphoserine mark. Residues 134-143 (KGKHASEKRH) are compositionally biased toward basic residues. 3 C2H2-type zinc fingers span residues 143 to 167 (HKCPYSGCGKVYGKSSHLKAHYRVH), 173 to 197 (FPCTWPDCLKKFSRSDELTRHYRTH), and 203 to 225 (FRCPLCEKRFMRSDHLTKHARRH).

The protein belongs to the Sp1 C2H2-type zinc-finger protein family. As to quaternary structure, interacts with ZZEF1.

The protein resides in the nucleus. Functionally, transcription factor that binds to GC box promoter elements. Selectively activates mRNA synthesis from genes containing tandem repeats of GC boxes but represses genes with a single GC box. Acts as an epidermal circadian transcription factor regulating keratinocyte proliferation. This chain is Krueppel-like factor 9 (Klf9), found in Mus musculus (Mouse).